Reading from the N-terminus, the 264-residue chain is Sulfur carrier protein FdhD (264 aa).

The active-site Cysteine persulfide intermediate is the cysteine 107.

It belongs to the FdhD family.

It localises to the cytoplasm. In terms of biological role, required for formate dehydrogenase (FDH) activity. Acts as a sulfur carrier protein that transfers sulfur from IscS to the molybdenum cofactor prior to its insertion into FDH. The protein is Sulfur carrier protein FdhD of Staphylococcus haemolyticus (strain JCSC1435).